A 509-amino-acid polypeptide reads, in one-letter code: Acetyl-coenzyme A carboxylase carboxyl transferase subunit beta, chloroplastic (509 aa).

Positions 164–216 (HGSVCDGESHNSSEGESSSRRTHTKGVDLTIRESSNENERESSNENERKSSND) are disordered. Composition is skewed to basic and acidic residues over residues 170 to 182 (GESHNSSEGESSS) and 193 to 216 (TIRESSNENERESSNENERKSSND). The CoA carboxyltransferase N-terminal domain maps to 226 to 509 (LWLQCENCYG…LNQNSNQVEC (284 aa)). Residues Cys230, Cys233, Cys249, and Cys252 each coordinate Zn(2+). Residues 230 to 252 (CENCYGLNYKKFLKSKMNICEQC) form a C4-type zinc finger. The disordered stretch occupies residues 288–307 (FDSEGEQEQEQEQEQEEEET).

Belongs to the AccD/PCCB family. As to quaternary structure, acetyl-CoA carboxylase is a heterohexamer composed of biotin carboxyl carrier protein, biotin carboxylase and 2 subunits each of ACCase subunit alpha and ACCase plastid-coded subunit beta (accD). Requires Zn(2+) as cofactor.

The protein localises to the plastid. The protein resides in the chloroplast stroma. It carries out the reaction N(6)-carboxybiotinyl-L-lysyl-[protein] + acetyl-CoA = N(6)-biotinyl-L-lysyl-[protein] + malonyl-CoA. It participates in lipid metabolism; malonyl-CoA biosynthesis; malonyl-CoA from acetyl-CoA: step 1/1. Functionally, component of the acetyl coenzyme A carboxylase (ACC) complex. Biotin carboxylase (BC) catalyzes the carboxylation of biotin on its carrier protein (BCCP) and then the CO(2) group is transferred by the transcarboxylase to acetyl-CoA to form malonyl-CoA. The polypeptide is Acetyl-coenzyme A carboxylase carboxyl transferase subunit beta, chloroplastic (Ipomoea purpurea (Common morning glory)).